We begin with the raw amino-acid sequence, 542 residues long: MSRQSLTKAHAKISELTWEPTFATPATRFGTDYTFEKAPKKDPLKQIMRSYFSMEEEKDNRVYGAMDGAIRGNMFRQVQQRWLEWQKLFLSIIPFPEISAARAMPMAIDAVPNPEIHNGLAVQMIDEVRHSTIQMNLKKLYMNNYIDPSGFDMTEKAFANNYAGTIGRQFGEGFITGDAITAANIYLTVVAETAFTNTLFVAMPDEAAANGDYLLPTVFHSVQSDESRHISNGYSILLMALADERNRPLLERDLRYAWWNNHCVVDAAIGTFIEYGTKDRRKDRESYAEMWRRWIYDDYYRSYLLPLEKYGLTIPHDLVEEAWKRIVEKGYVHEVARFFATGWPVNYWRIDTMTDTDFEWFEHKYPGWYSKFGKWWENYNRLAYPGRNKPIAFEEVGYQYPHRCWTCMVPALIREDMIVEKVDGQWRTYCSETCYWTDAVAFRGEYEGRETPNMGRLTGFREWETLHHGKDLADIVTDLGYVRDDGKTLVGQPHLNLDPQKMWTLDDVRGNTFNSPNVLLNQMTDDERDAHVAAYRAGGVPA.

The Fe cation site is built by Glu-97, Glu-127, His-130, Glu-192, Glu-226, and His-229.

The protein belongs to the TmoA/XamoA family. As to quaternary structure, the propane 2-monooxygenase multicomponent enzyme system is composed of an electron transfer component and a monooxygenase component interacting with the effector protein MimD. The electron transfer component is composed of a reductase (MimB), and the monooxygenase component is formed by a large subunit (MimA) and a small subunit (MimC). Requires the presence of the chaperonin-like protein MimG to ensure a productive folding, resulting of a soluble MimA, which leads to the active form of MimABCD. The cofactor is Fe(2+).

The catalysed reaction is propane + NADH + O2 + H(+) = propan-2-ol + NAD(+) + H2O. It carries out the reaction acetone + NADH + O2 + H(+) = hydroxyacetone + NAD(+) + H2O. It catalyses the reaction butan-2-one + NADH + O2 + H(+) = 1-hydroxy-2-butanone + NAD(+) + H2O. The enzyme catalyses phenol + NADH + O2 + H(+) = hydroquinone + NAD(+) + H2O. Its function is as follows. Component of the propane 2-monooxygenase multicomponent enzyme system which is involved in the degradation of propane via the O2-dependent hydroxylation of propane. Also involved in the degradation of acetone via the O2-dependent hydroxylation of acetone. Also able to catalyze the oxidation of phenol, methylethylketone (2-butanone), 1-propanol and 2-propanol. The protein is Propane 2-monooxygenase, hydroxylase component large subunit of Mycolicibacterium smegmatis (strain ATCC 700084 / mc(2)155) (Mycobacterium smegmatis).